Reading from the N-terminus, the 207-residue chain is MIOREX complex component 11 (207 aa).

A mitochondrion-targeting transit peptide spans 1-46 (MTVMNLFFRPCQLQMGSGPLELMLKRPTQLTTFMNTRPGGSTQIRF). The Mitochondrial matrix portion of the chain corresponds to 47–98 (ISGNLDPVKRREDRLRKIFSKSRLLTRLNKNPKFSHYFDRLSEAGTVPTLTS). The chain crosses the membrane as a helical span at residues 99 to 119 (FFILHEVTAILPLFLLWWLLY). Over 120-177 (NLDLSDDFKLPNFLNGLMDSCHTAMEKFVGKRYQECLNKNKLILSGTVAYVTVKLLYP) the chain is Mitochondrial intermembrane. A helical transmembrane segment spans residues 178–198 (VRIFISIWGAPYFGKWLLLPF). Over 199–207 (QKLKHLIKK) the chain is Mitochondrial matrix.

This sequence belongs to the MRX11 family. In terms of assembly, associates with the mitochondrial ribosome.

Its subcellular location is the mitochondrion. The protein resides in the mitochondrion inner membrane. Its function is as follows. Component of MIOREX complexes, large expressome-like assemblies of ribosomes with factors involved in all the steps of post-transcriptional gene expression. This is MIOREX complex component 11 from Saccharomyces cerevisiae (strain ATCC 204508 / S288c) (Baker's yeast).